Reading from the N-terminus, the 400-residue chain is MSDIISIKDIDLAKKKVFIRCDFNVPQDDFLNITDDRRIRSAIPTIRYCLDNGCSVILASHLGRPKEISSKYSLEPVAKRLARLLDKEIIMAKDVIGEDAKTKAMNLKAGEILLLENLRFEKGETKNDENLAKELASMVQVYINDAFGVCHRAHSSVEAITKFFDEKHKGAGFLLQKEIDFASNLIKHPARPFVAVVGGSKVSGKLQALTNLLPKVDKLIIGGGMAFTFLKALGYDIGNSLLEEELLEEANKILTKGKNLGVKIYLPVDVVAAPACSQDAPMKFVPVQEIPNGWMGLDIGPASVRLFKEVISDAQTIWWNGPMGVFEIDKFSKGSIKMSHYISEGHATSVVGGGDTADVVARAGDADEMTFISTGGGASLELIEGKELPGVKALRSKENE.

Residues 22–24 (DFN), R38, 61–64 (HLGR), R119, and R152 each bind substrate. Residues K205, G296, E327, and 353 to 356 (GGDT) each bind ATP.

The protein belongs to the phosphoglycerate kinase family. Monomer.

It is found in the cytoplasm. The catalysed reaction is (2R)-3-phosphoglycerate + ATP = (2R)-3-phospho-glyceroyl phosphate + ADP. The protein operates within carbohydrate degradation; glycolysis; pyruvate from D-glyceraldehyde 3-phosphate: step 2/5. In Campylobacter jejuni subsp. jejuni serotype O:6 (strain 81116 / NCTC 11828), this protein is Phosphoglycerate kinase.